The sequence spans 398 residues: Cell division protein FtsZ (398 aa).

Residues 21 to 25 (GGGGN), 108 to 110 (GTG), Glu139, Arg143, and Asp187 contribute to the GTP site.

It belongs to the FtsZ family. In terms of assembly, homodimer. Polymerizes to form a dynamic ring structure in a strictly GTP-dependent manner. Interacts directly with several other division proteins.

It localises to the cytoplasm. Its function is as follows. Essential cell division protein that forms a contractile ring structure (Z ring) at the future cell division site. The regulation of the ring assembly controls the timing and the location of cell division. One of the functions of the FtsZ ring is to recruit other cell division proteins to the septum to produce a new cell wall between the dividing cells. Binds GTP and shows GTPase activity. The polypeptide is Cell division protein FtsZ (Pseudomonas putida (strain ATCC 47054 / DSM 6125 / CFBP 8728 / NCIMB 11950 / KT2440)).